The sequence spans 132 residues: uncharacterized protein (132 aa).

An N-terminal signal peptide occupies residues 1 to 24 (MVTIGSSSLVLFLFFVVFVQITYT). The next 2 membrane-spanning stretches (helical) occupy residues 75–95 (YVNVEIIVGIPLLIKAIILGI) and 112–132 (ESAILHNSINIIIIILYVYIH).

It is found in the membrane. This is an uncharacterized protein from Saccharomyces cerevisiae (strain ATCC 204508 / S288c) (Baker's yeast).